The sequence spans 745 residues: 5-methyltetrahydropteroyltriglutamate--homocysteine methyltransferase (745 aa).

Residues 19–22 and lysine 119 each bind 5-methyltetrahydropteroyltri-L-glutamate; that span reads RELK. Residues 418–420 and glutamate 471 contribute to the L-homocysteine site; that span reads IGS. L-methionine-binding positions include 418 to 420 and glutamate 471; that span reads IGS. 5-methyltetrahydropteroyltri-L-glutamate-binding positions include 502–503 and tryptophan 548; that span reads RC. Residue aspartate 586 participates in L-homocysteine binding. Aspartate 586 serves as a coordination point for L-methionine. Glutamate 592 lines the 5-methyltetrahydropteroyltri-L-glutamate pocket. The Zn(2+) site is built by histidine 628, cysteine 630, and glutamate 652. The Proton donor role is filled by histidine 681. Cysteine 713 contributes to the Zn(2+) binding site.

The protein belongs to the vitamin-B12 independent methionine synthase family. Zn(2+) serves as cofactor.

It carries out the reaction 5-methyltetrahydropteroyltri-L-glutamate + L-homocysteine = tetrahydropteroyltri-L-glutamate + L-methionine. The protein operates within amino-acid biosynthesis; L-methionine biosynthesis via de novo pathway; L-methionine from L-homocysteine (MetE route): step 1/1. Its function is as follows. Catalyzes the transfer of a methyl group from 5-methyltetrahydrofolate to homocysteine resulting in methionine formation. The chain is 5-methyltetrahydropteroyltriglutamate--homocysteine methyltransferase from Corynebacterium glutamicum (strain R).